Consider the following 76-residue polypeptide: Mu-scoloptoxin(15)-Ssm1a (76 aa).

A signal peptide spans 1–23 (MEKKIIFLVFLVALLALPGFIST). The interval 33 to 36 (KKRK) is important for inhibition of KCNQ4. Intrachain disulfides connect Cys43-Cys69 and Cys47-Cys71.

Belongs to the scoloptoxin-15 family. In terms of tissue distribution, expressed by the venom gland.

It is found in the secreted. Functionally, blocks voltage-gated potassium channels Kv7.4/KCNQ4 (IC(50)=2.5 uM), Kv7.1/KCNQ1 (IC(50)=2.8 uM), Kv7.2/KCNQ2 (IC(50)=2.7 uM) and Kv7.5/KCNQ5 (IC(50)=2.7 uM). Targets the pore domain, in particular negatively charged residues 'Asp-266' and 'Asp-288', of KCNQ4 and probably other KCNQ channel family members where these residues are conserved. In vivo, shows vasoconstrictive activity resulting in acute hypertension when injected intravenously in mice. Also induces coronary vasospasms ultimately leading to heart failure. Induces seizures when injected into the hippocampus of mice. Decreases respiratory rate while increasing respiratory amplitude, probably by triggering a contraction of the bronchial ring. This chain is Mu-scoloptoxin(15)-Ssm1a, found in Scolopendra mutilans (Chinese red-headed centipede).